The sequence spans 413 residues: SWIRM domain-containing protein FUN19 (413 aa).

Positions 35–51 are enriched in low complexity; the sequence is KASNNNNDSNKNGLNMS. Disordered stretches follow at residues 35–55, 189–211, and 249–271; these read KASN…DYSN, YNDD…PLAS, and YSPQ…PSAS. The residue at position 194 (threonine 194) is a Phosphothreonine. The segment covering 200–211 has biased composition (low complexity); the sequence is SSSSRLPSPLAS. Residues serine 207 and serine 211 each carry the phosphoserine modification. The 98-residue stretch at 316–413 folds into the SWIRM domain; it reads LKIEWKGSPM…LQDSNFTKYL (98 aa).

The sequence is that of SWIRM domain-containing protein FUN19 (FUN19) from Saccharomyces cerevisiae (strain ATCC 204508 / S288c) (Baker's yeast).